Reading from the N-terminus, the 503-residue chain is MEEFQGYLELDRSRQHDFLYPLLFREYIYALAHDHGLNKSILSENVGYGNKSSSIIVKRLITRMYQQNPLIFSANDSIQNQFFGHNKNLYSQIISEGFAVIVEIRFSLLLVSFLERKEIAKSQNLQSIHSIFPFLEVKFSHLDYVSDVLIPYHIHLEILVQTLRYWVKDASSLHLLRFFLHEYWNTLITPKKYITLFSKGNPRFFLFLYNSHICEYESVFXFXRNKSSHLWSTSSGIFXXRIYFYVKIEHXVKVFFDNDFQCILWFFKDPFMHYVRYQGKSIXASKDTPLLMNKWKYYLVNLWQYHFYXXFQPGRININQLCKYSLDFLGYRSSLXLXSSVVRSQMLENLXIINNAMKKFXXXVPIIPLIGSLSKANFXNTLGHPISKPTRSDXSDSDIINRFLRICRNLSHYHSGSSKKKSLYRVKYILRLSCVKTLARKHKITIRTFLKKSGSEFLEEFLTEEEVVLSLIFPRTYSTSRRLYREQSWXLDITSINDLVNYE.

The protein belongs to the intron maturase 2 family. MatK subfamily.

Its subcellular location is the plastid. It localises to the chloroplast. Functionally, usually encoded in the trnK tRNA gene intron. Probably assists in splicing its own and other chloroplast group II introns. This Backhousia myrtifolia (Grey myrtle) protein is Maturase K.